A 248-amino-acid polypeptide reads, in one-letter code: 3-deoxy-manno-octulosonate cytidylyltransferase (248 aa).

This sequence belongs to the KdsB family.

Its subcellular location is the cytoplasm. It carries out the reaction 3-deoxy-alpha-D-manno-oct-2-ulosonate + CTP = CMP-3-deoxy-beta-D-manno-octulosonate + diphosphate. It participates in nucleotide-sugar biosynthesis; CMP-3-deoxy-D-manno-octulosonate biosynthesis; CMP-3-deoxy-D-manno-octulosonate from 3-deoxy-D-manno-octulosonate and CTP: step 1/1. It functions in the pathway bacterial outer membrane biogenesis; lipopolysaccharide biosynthesis. Functionally, activates KDO (a required 8-carbon sugar) for incorporation into bacterial lipopolysaccharide in Gram-negative bacteria. The protein is 3-deoxy-manno-octulosonate cytidylyltransferase of Desulfosudis oleivorans (strain DSM 6200 / JCM 39069 / Hxd3) (Desulfococcus oleovorans).